The sequence spans 340 residues: Heat-inducible transcription repressor HrcA (340 aa).

Belongs to the HrcA family.

Its function is as follows. Negative regulator of class I heat shock genes (grpE-dnaK-dnaJ and groELS operons). Prevents heat-shock induction of these operons. This chain is Heat-inducible transcription repressor HrcA, found in Mycoplasma capricolum subsp. capricolum (strain California kid / ATCC 27343 / NCTC 10154).